Reading from the N-terminus, the 456-residue chain is Esterase MT1326 (456 aa).

LysM domains are found at residues 3–50 (STHA…RLIM), 54–101 (TRYT…RLIM), and 105–152 (TRYT…VLVI). Active-site residues include serine 294, aspartate 391, and histidine 425.

Belongs to the AB hydrolase superfamily.

The protein localises to the secreted. Its subcellular location is the cell wall. The catalysed reaction is a fatty acid ester + H2O = an aliphatic alcohol + a fatty acid + H(+). Functionally, exhibits lipolytic activity with medium chain length esters as optimum substrates. The chain is Esterase MT1326 from Mycobacterium tuberculosis (strain CDC 1551 / Oshkosh).